Here is a 268-residue protein sequence, read N- to C-terminus: Type III pantothenate kinase 1 (268 aa).

6–13 contributes to the ATP binding site; it reads DIGNTNIT. Residues Y100 and 107–110 each bind substrate; that span reads GTDR. The active-site Proton acceptor is D109. Residue D133 coordinates K(+). T136 lines the ATP pocket.

The protein belongs to the type III pantothenate kinase family. In terms of assembly, homodimer. The cofactor is NH4(+). K(+) is required as a cofactor.

It localises to the cytoplasm. The enzyme catalyses (R)-pantothenate + ATP = (R)-4'-phosphopantothenate + ADP + H(+). It functions in the pathway cofactor biosynthesis; coenzyme A biosynthesis; CoA from (R)-pantothenate: step 1/5. In terms of biological role, catalyzes the phosphorylation of pantothenate (Pan), the first step in CoA biosynthesis. This chain is Type III pantothenate kinase 1, found in Symbiobacterium thermophilum (strain DSM 24528 / JCM 14929 / IAM 14863 / T).